The primary structure comprises 58 residues: Large ribosomal subunit protein bL32 (58 aa).

Basic residues predominate over residues 1 to 15 (MAVPKKKTSKAKRNQ). The tract at residues 1–23 (MAVPKKKTSKAKRNQRSATWKGK) is disordered.

Belongs to the bacterial ribosomal protein bL32 family.

The polypeptide is Large ribosomal subunit protein bL32 (Parasynechococcus marenigrum (strain WH8102)).